The primary structure comprises 70 residues: Homeobox protein OTX2 (70 aa).

The interval 34-70 is disordered; it reads HQLPGPGATLSPMGTNAVTSHLNQSPASLSTQGYGAS. Over residues 45-70 the composition is skewed to polar residues; sequence PMGTNAVTSHLNQSPASLSTQGYGAS.

Belongs to the paired homeobox family. Bicoid subfamily.

It is found in the nucleus. Transcription factor probably involved in the development of the brain and the sense organs. Can bind to the bicoid/BCD target sequence (BTS): 5'-TCTAATCCC-3'. The sequence is that of Homeobox protein OTX2 (Otx2) from Rattus norvegicus (Rat).